The sequence spans 899 residues: 1,4-alpha-glucan-branching enzyme 3, chloroplastic/amyloplastic (899 aa).

Residues 1–49 (MVSLSNQTRFSFHPNNLVVSEKRRLGISGVNFPRKIKLKITCFAAERPR) constitute a chloroplast transit peptide. Residues 47–67 (RPRQEKQKKKSQSQSTSDAEA) form a disordered region. The active-site Proton donor is the Glu-612.

Belongs to the glycosyl hydrolase 13 family. GlgB subfamily. As to quaternary structure, monomer. Mostly expressed in flowers and inflorescence, and, to a lower extent, in seedlings, roots, stems, leaves, siliques and seeds.

The protein resides in the plastid. Its subcellular location is the chloroplast stroma. It is found in the amyloplast. It catalyses the reaction Transfers a segment of a (1-&gt;4)-alpha-D-glucan chain to a primary hydroxy group in a similar glucan chain.. It functions in the pathway glycan biosynthesis; starch biosynthesis. Its function is as follows. Catalyzes the formation of the alpha-1,6-glucosidic linkages in starch by scission of a 1,4-alpha-linked oligosaccharide from growing alpha-1,4-glucan chains and the subsequent attachment of the oligosaccharide to the alpha-1,6 position. Essential during embryogenesis. The protein is 1,4-alpha-glucan-branching enzyme 3, chloroplastic/amyloplastic (SBE3) of Arabidopsis thaliana (Mouse-ear cress).